The chain runs to 58 residues: Large ribosomal subunit protein bL32 (58 aa).

This sequence belongs to the bacterial ribosomal protein bL32 family.

This is Large ribosomal subunit protein bL32 from Sulfurihydrogenibium sp. (strain YO3AOP1).